Here is a 313-residue protein sequence, read N- to C-terminus: Ribosomal RNA small subunit methyltransferase H (313 aa).

Residues 35 to 37 (GGH), aspartate 55, phenylalanine 79, aspartate 101, and glutamine 108 contribute to the S-adenosyl-L-methionine site.

This sequence belongs to the methyltransferase superfamily. RsmH family.

It localises to the cytoplasm. The enzyme catalyses cytidine(1402) in 16S rRNA + S-adenosyl-L-methionine = N(4)-methylcytidine(1402) in 16S rRNA + S-adenosyl-L-homocysteine + H(+). Functionally, specifically methylates the N4 position of cytidine in position 1402 (C1402) of 16S rRNA. This Salmonella agona (strain SL483) protein is Ribosomal RNA small subunit methyltransferase H.